Here is a 149-residue protein sequence, read N- to C-terminus: Large ribosomal subunit protein bL9 (149 aa).

Belongs to the bacterial ribosomal protein bL9 family.

Its function is as follows. Binds to the 23S rRNA. The polypeptide is Large ribosomal subunit protein bL9 (Geobacillus sp. (strain WCH70)).